Here is a 57-residue protein sequence, read N- to C-terminus: Large ribosomal subunit protein bL32 (57 aa).

It belongs to the bacterial ribosomal protein bL32 family.

The chain is Large ribosomal subunit protein bL32 from Geobacillus kaustophilus (strain HTA426).